The chain runs to 240 residues: MORN repeat-containing protein 3 (240 aa).

Residues 6–35 (CPKKSESLWKGWDRKAQKNGLRRQVYAVNG) form an interaction with MDM2 region. MORN repeat units lie at residues 38–60 (YVGEWKDNVKHGKGTQVWKKNGA), 62–84 (YEGDWKFGKRDGYGTLSLPDQQT), 91–113 (YSGWWKGDKKSGYGIQFFGPKEY), 114–136 (YEGEWCGSQRSGWGRMYYSNGDI), 137–159 (YEGQWENDKPNGDGMLRLKNGNR), 160–182 (YEGCWERGMKNGLGRFFHLDHGQ), and 184–205 (FEGFWVDNMAKCGTMIDFGRDE). The interaction with SIRT1 stretch occupies residues 76–100 (TLSLPDQQTGKCRRVYSGWWKGDKK). Residues 206–240 (APEPTQFPIPEVKILDPDGVLAQALAMFKKTEEGD) form an interaction with TP53 region.

In terms of assembly, interacts with MEIG1. Interacts with TP53, MDM2 and SIRT1; the interactions mediate post-transcriptional modifications of TP53 by MDM2 and SIRT1.

It is found in the cytoplasmic vesicle. It localises to the secretory vesicle. Its subcellular location is the acrosome. In terms of biological role, assembles a suppression complex (suppresome) by tethering SIRT1 and MDM2 to regulate composite modifications of p53/TP53. Confers both deacetylation-mediated functional inactivation, by SIRT1, and ubiquitination-dependent degradation, by MDM2, of p53/TP53, promoting a proliferative and cell survival behaviors. May play a role in the regulation of spermatogenesis. The chain is MORN repeat-containing protein 3 (MORN3) from Macaca fascicularis (Crab-eating macaque).